The primary structure comprises 58 residues: Photosystem II reaction center X protein (58 aa).

The helical transmembrane segment at 27-47 (IGSFLAAAAFIVVPAASFLIW) threads the bilayer.

This sequence belongs to the PsbX family. Type 2 subfamily. In terms of assembly, PSII consists of a core antenna complex that captures photons, and an electron transfer chain that converts photonic excitation into a charge separation. PSII forms dimeric complexes.

It is found in the cellular thylakoid membrane. Its function is as follows. Involved in the binding and/or turnover of quinones at the Q(B) site of Photosystem II. This is Photosystem II reaction center X protein from Prochlorococcus marinus (strain MIT 9211).